The following is a 198-amino-acid chain: Transmembrane protein 9B (198 aa).

The first 33 residues, methionine 1–alanine 33, serve as a signal peptide directing secretion. A glycan (N-linked (GlcNAc...) asparagine) is linked at asparagine 60. Residues isoleucine 105–valine 125 form a helical membrane-spanning segment. A phosphoserine mark is found at serine 142 and serine 189.

The protein belongs to the TMEM9 family. Post-translationally, N-glycosylated.

The protein localises to the lysosome membrane. Its subcellular location is the early endosome membrane. Enhances production of pro-inflammatory cytokines induced by TNF, IL1B, and TLR ligands. Has a role in TNF activation of both the NF-kappaB and MAPK pathways. In Homo sapiens (Human), this protein is Transmembrane protein 9B (TMEM9B).